The primary structure comprises 587 residues: Nucleoporin p58/p45 (587 aa).

Tandem repeats lie at residues 7-8 (FG), 30-31 (FG), 44-45 (FG), 63-64 (FG), and 68-69 (FG). The segment at 7 to 567 (FGSGTLGSTT…VSNPASAGFG (561 aa)) is 14 X 2 AA repeats of F-G. Positions 196–236 (TSAASNEGLGGIDFSTSSDKKSDKTGTRPEDSKALKDENLP) are disordered. A compositionally biased stretch (basic and acidic residues) spans 213–234 (SDKKSDKTGTRPEDSKALKDEN). 2 coiled-coil regions span residues 244 to 264 (ENLQKFVKEQKQVQEEISRMS) and 302 to 369 (ETAQ…SHIT). A Phosphothreonine modification is found at Thr319. 9 repeat units span residues 476 to 477 (FG), 480 to 481 (FG), 501 to 502 (FG), 507 to 508 (FG), 517 to 518 (FG), 519 to 520 (FG), 533 to 534 (FG), 556 to 557 (FG), and 566 to 567 (FG). Residues 565 to 587 (GFGTGGQLLQLKRPPAGNKRGKR) are disordered.

It belongs to the NUP58 family. As to quaternary structure, component of the p62 complex, a complex at least composed of NUP62, NUP54, and NUP58. Interacts with NUTF2. Interacts with SRP1-alpha and Importin p97 proteins when they are together, but not with SRP1-alpha protein alone. Post-translationally, O-glycosylated.

The protein resides in the nucleus. The protein localises to the nuclear pore complex. Its subcellular location is the nucleus membrane. In terms of biological role, component of the nuclear pore complex, a complex required for the trafficking across the nuclear membrane. This is Nucleoporin p58/p45 from Mus musculus (Mouse).